The primary structure comprises 83 residues: Small ribosomal subunit protein eS21 (83 aa).

It belongs to the eukaryotic ribosomal protein eS21 family. Component of the 40S small ribosomal subunit. Interacts with sta.

Its subcellular location is the cytoplasm. It is found in the cytosol. It localises to the rough endoplasmic reticulum. This is Small ribosomal subunit protein eS21 (RpS21) from Ceratitis capitata (Mediterranean fruit fly).